The chain runs to 485 residues: Katanin p60 ATPase-containing subunit A1 (485 aa).

The tract at residues 101 to 173 (HRSSPCVVRK…KNKAEAVETE (73 aa)) is disordered. The span at 141–173 (NGDKGKPQKSKEKKENPSKPKEDKNKAEAVETE) shows a compositional bias: basic and acidic residues. 244-251 (GPPGTGKT) provides a ligand contact to ATP.

It belongs to the AAA ATPase family. Katanin p60 subunit A1 subfamily. As to quaternary structure, can homooligomerize into hexameric rings, which may be promoted by interaction with microtubules. Interacts with katnb1, which may serve as a targeting subunit.

It localises to the cytoplasm. The protein localises to the cytoskeleton. It is found in the microtubule organizing center. Its subcellular location is the centrosome. The protein resides in the spindle pole. It localises to the spindle. It catalyses the reaction n ATP + n H2O + a microtubule = n ADP + n phosphate + (n+1) alpha/beta tubulin heterodimers.. With respect to regulation, ATPase activity is stimulated by microtubules, which promote homooligomerization. ATP-dependent microtubule severing is stimulated by interaction with katnb1. Functionally, catalytic subunit of a complex which severs microtubules in an ATP-dependent manner. Microtubule severing may promote rapid reorganization of cellular microtubule arrays and the release of microtubules from the centrosome following nucleation. This chain is Katanin p60 ATPase-containing subunit A1 (katna1), found in Danio rerio (Zebrafish).